A 25-amino-acid polypeptide reads, in one-letter code: Inorganic pyrophosphatase (25 aa).

Monomer. The cofactor is Mg(2+).

It catalyses the reaction diphosphate + H2O = 2 phosphate + H(+). The protein is Inorganic pyrophosphatase of Cyanophora paradoxa.